Here is a 221-residue protein sequence, read N- to C-terminus: Sugar transporter SWEET1 (221 aa).

The next 7 membrane-spanning stretches (helical) occupy residues 3 to 23 (AGGV…LGMF), 43 to 63 (QFLP…YGVL), 68 to 88 (TLII…LAYL), 102 to 122 (ATLL…VPDL), 129 to 149 (LGLF…ADLA), 160 to 180 (LSFS…IYGF), and 186 to 206 (YITV…GLFC). Residues 10 to 94 (FLSSACVLFT…LAYLHYSPQK (85 aa)) enclose the MtN3/slv 1 domain. In terms of domain architecture, MtN3/slv 2 spans 127-212 (QQLGLFCSVF…GLFCKYPPEQ (86 aa)). Positions 149–221 (AKIVQTKSTQ…QDRKYRLLQT (73 aa)) are mediates interaction with TRPV2.

Belongs to the SWEET sugar transporter family. As to quaternary structure, interacts with TRPV2; the interaction probably occurs intracellularly and depends on TRPV2 N-glycosylation. As to expression, expressed at high levels in lung, placenta, spleen and thymus, at intermediate levels in brain, heart, kidney and testis, and at low levels in bone marrow, liver and lymph node. Within the thymus expression is highest in non-lymphoid cells.

It is found in the golgi apparatus membrane. The protein localises to the cell membrane. Mediates sugar transport across membranes. May regulate the expression of RAG1 a gene involved in V(D)J recombination. This is Sugar transporter SWEET1 (Slc50a1) from Mus musculus (Mouse).